We begin with the raw amino-acid sequence, 120 residues long: Movement protein TGB2 (120 aa).

At 1-16 (MSSTSEPTYQLAPPDS) the chain is on the cytoplasmic side. Residues 17–37 (LKQVYLTLAAGFAVGLGIFLL) form a helical membrane-spanning segment. Over 38–76 (RTNTLPHTGDNIHHLPHGGCYRDGTKSIRYNSPGVATSS) the chain is Lumenal. A helical transmembrane segment spans residues 77–97 (NIFLPAVAVLCILALLHVPFF). The Cytoplasmic segment spans residues 98 to 120 (QPDRVRRRCCRFYWCADPHHPTV).

This sequence belongs to the Tymovirales TGBp2 protein family.

The protein localises to the host endoplasmic reticulum membrane. Functionally, plays a role in viral cell-to-cell propagation, by facilitating genome transport to neighboring plant cells through plasmosdesmata,. This chain is Movement protein TGB2 (ORF3), found in Lolium latent virus (isolate Lolium/USA/US1/-) (LoLV).